A 319-amino-acid chain; its full sequence is Beta-ketoacyl-[acyl-carrier-protein] synthase III (319 aa).

Residues C113 and H246 contribute to the active site. Residues 247–251 form an ACP-binding region; it reads QANIR. Residue N276 is part of the active site.

This sequence belongs to the thiolase-like superfamily. FabH family. Homodimer.

It is found in the cytoplasm. The catalysed reaction is malonyl-[ACP] + acetyl-CoA + H(+) = 3-oxobutanoyl-[ACP] + CO2 + CoA. It participates in lipid metabolism; fatty acid biosynthesis. In terms of biological role, catalyzes the condensation reaction of fatty acid synthesis by the addition to an acyl acceptor of two carbons from malonyl-ACP. Catalyzes the first condensation reaction which initiates fatty acid synthesis and may therefore play a role in governing the total rate of fatty acid production. Possesses both acetoacetyl-ACP synthase and acetyl transacylase activities. Its substrate specificity determines the biosynthesis of branched-chain and/or straight-chain of fatty acids. In Ehrlichia chaffeensis (strain ATCC CRL-10679 / Arkansas), this protein is Beta-ketoacyl-[acyl-carrier-protein] synthase III.